The following is a 342-amino-acid chain: 4-hydroxythreonine-4-phosphate dehydrogenase (342 aa).

Residues His139 and Thr140 each coordinate substrate. A divalent metal cation is bound by residues His174, His219, and His274. Substrate is bound by residues Lys282, Asn291, and Arg300.

The protein belongs to the PdxA family. In terms of assembly, homodimer. The cofactor is Zn(2+). Requires Mg(2+) as cofactor. Co(2+) is required as a cofactor.

It localises to the cytoplasm. It carries out the reaction 4-(phosphooxy)-L-threonine + NAD(+) = 3-amino-2-oxopropyl phosphate + CO2 + NADH. Its pathway is cofactor biosynthesis; pyridoxine 5'-phosphate biosynthesis; pyridoxine 5'-phosphate from D-erythrose 4-phosphate: step 4/5. Catalyzes the NAD(P)-dependent oxidation of 4-(phosphooxy)-L-threonine (HTP) into 2-amino-3-oxo-4-(phosphooxy)butyric acid which spontaneously decarboxylates to form 3-amino-2-oxopropyl phosphate (AHAP). In Mesorhizobium japonicum (strain LMG 29417 / CECT 9101 / MAFF 303099) (Mesorhizobium loti (strain MAFF 303099)), this protein is 4-hydroxythreonine-4-phosphate dehydrogenase.